Reading from the N-terminus, the 207-residue chain is Guanylate kinase (207 aa).

A Guanylate kinase-like domain is found at 4 to 184 (GTLYIVSAPS…ALTDLKTIIR (181 aa)). 11 to 18 (APSGAGKS) lines the ATP pocket.

Belongs to the guanylate kinase family.

Its subcellular location is the cytoplasm. The enzyme catalyses GMP + ATP = GDP + ADP. Functionally, essential for recycling GMP and indirectly, cGMP. The chain is Guanylate kinase from Escherichia coli O6:K15:H31 (strain 536 / UPEC).